An 89-amino-acid polypeptide reads, in one-letter code: uncharacterized protein (89 aa).

The protein to Rhizobium NGR234A y4oN.

This is an uncharacterized protein from Sinorhizobium fredii (strain NBRC 101917 / NGR234).